A 174-amino-acid chain; its full sequence is MAASMARGVSARVLLRAAGGSWGPRAGHAAVTSRTFGTTGERRAGEEAADSPELPRDVVNVVFVDRSGKRIPVRGKVGDNVLYLAQRHGVDLEGACEASLACSTCHVYVSEAHLDLLPPPEEREDDMLDMAPLLQENSRLGCQIVLTPELEGVEFALPKITRNFYVDGHIPKPH.

Residues 1-43 constitute a mitochondrion transit peptide; it reads MAASMARGVSARVLLRAAGGSWGPRAGHAAVTSRTFGTTGERR. The interval 26-52 is disordered; the sequence is AGHAAVTSRTFGTTGERRAGEEAADSP. In terms of domain architecture, 2Fe-2S ferredoxin-type spans 59–161; that stretch reads VNVVFVDRSG…GVEFALPKIT (103 aa). Residues C96, C102, C105, and C142 each contribute to the [2Fe-2S] cluster site.

The protein belongs to the adrenodoxin/putidaredoxin family. As to quaternary structure, component of the mitochondrial core iron-sulfur cluster (ISC) complex composed of NFS1, LYRM4, NDUFAB1, ISCU, FXN, and FDX2; this complex is a heterohexamer containing two copies of each monomer. Form a heterodimer complex with NFS1. Interacts (in both their reduced and oxidized states) with the cysteine desulfurase (NFS1:LYRM4) complex; this interaction stimulates cysteine desulfurase activity, and serves as a reductant for Fe-S cluster assembly. Requires [2Fe-2S] cluster as cofactor.

It localises to the mitochondrion. The protein localises to the mitochondrion matrix. Electron donor, of the core iron-sulfur cluster (ISC) assembly complex, that acts to reduce the persulfide into sulfide during [2Fe-2S] clusters assembly on the scaffolding protein ISCU. The core iron-sulfur cluster (ISC) assembly complex is involved in the de novo synthesis of a [2Fe-2S] cluster, the first step of the mitochondrial iron-sulfur protein biogenesis. This process is initiated by the cysteine desulfurase complex (NFS1:LYRM4:NDUFAB1) that produces persulfide which is delivered on the scaffold protein ISCU in a FXN-dependent manner. Then this complex is stabilized by FDX2 which provides reducing equivalents to accomplish the [2Fe-2S] cluster assembly. Finally, the [2Fe-2S] cluster is transferred from ISCU to chaperone proteins, including HSCB, HSPA9 and GLRX5. Essential for coenzyme Q biosynthesis: together with FDXR, transfers the electrons required for the hydroxylation reaction performed by COQ6. This Mus musculus (Mouse) protein is Ferredoxin-2, mitochondrial.